Reading from the N-terminus, the 308-residue chain is Transaldolase (308 aa).

The active-site Schiff-base intermediate with substrate is Lys125.

The protein belongs to the transaldolase family. Type 1 subfamily. In terms of assembly, homodimer.

It localises to the cytoplasm. It carries out the reaction D-sedoheptulose 7-phosphate + D-glyceraldehyde 3-phosphate = D-erythrose 4-phosphate + beta-D-fructose 6-phosphate. The protein operates within carbohydrate degradation; pentose phosphate pathway; D-glyceraldehyde 3-phosphate and beta-D-fructose 6-phosphate from D-ribose 5-phosphate and D-xylulose 5-phosphate (non-oxidative stage): step 2/3. Transaldolase is important for the balance of metabolites in the pentose-phosphate pathway. The sequence is that of Transaldolase from Stutzerimonas stutzeri (strain A1501) (Pseudomonas stutzeri).